Here is a 378-residue protein sequence, read N- to C-terminus: Glutamate 5-kinase (378 aa).

Residue lysine 21 coordinates ATP. Substrate is bound by residues serine 61, aspartate 148, and asparagine 160. Position 180–181 (180–181 (TD)) interacts with ATP. Positions 286–364 (RGTLVLDAGA…RRIEELLGYM (79 aa)) constitute a PUA domain.

The protein belongs to the glutamate 5-kinase family.

The protein resides in the cytoplasm. It catalyses the reaction L-glutamate + ATP = L-glutamyl 5-phosphate + ADP. Its pathway is amino-acid biosynthesis; L-proline biosynthesis; L-glutamate 5-semialdehyde from L-glutamate: step 1/2. Functionally, catalyzes the transfer of a phosphate group to glutamate to form L-glutamate 5-phosphate. The sequence is that of Glutamate 5-kinase from Chromohalobacter salexigens (strain ATCC BAA-138 / DSM 3043 / CIP 106854 / NCIMB 13768 / 1H11).